The chain runs to 518 residues: Arrestin-related trafficking adapter 10 (518 aa).

Residue lysine 118 forms a Glycyl lysine isopeptide (Lys-Gly) (interchain with G-Cter in ubiquitin) linkage.

Belongs to the ART10 family. As to quaternary structure, interacts with RSP5. Ubiquitinated by RSP5.

The protein localises to the cytoplasm. In terms of biological role, may regulate endocytosis by recruiting RSP5 ubiquitin ligase activity to specific plasma membrane proteins in response to extracellular stimuli. The sequence is that of Arrestin-related trafficking adapter 10 (ART10) from Saccharomyces cerevisiae (strain YJM789) (Baker's yeast).